The chain runs to 235 residues: tRNA (guanine-N(1)-)-methyltransferase (235 aa).

S-adenosyl-L-methionine contacts are provided by residues G114 and 134–139 (IGDYIL).

Belongs to the RNA methyltransferase TrmD family. In terms of assembly, homodimer.

It localises to the cytoplasm. The catalysed reaction is guanosine(37) in tRNA + S-adenosyl-L-methionine = N(1)-methylguanosine(37) in tRNA + S-adenosyl-L-homocysteine + H(+). Functionally, specifically methylates guanosine-37 in various tRNAs. This chain is tRNA (guanine-N(1)-)-methyltransferase, found in Ehrlichia ruminantium (strain Gardel).